The primary structure comprises 474 residues: Synaptotagmin-17 (474 aa).

Residues 54-112 (PAQTPPWLVSNRSEDKEGDSDNTTSEPPATPQDTSPDRRRSSSDTSRSTYSLTRRISSL) form a disordered region. Over residues 96 to 112 (SDTSRSTYSLTRRISSL) the composition is skewed to low complexity. 2 consecutive C2 domains span residues 184 to 310 (QLGM…HWWK) and 321 to 455 (ELGE…EQWH).

This sequence belongs to the synaptotagmin family.

The protein localises to the membrane. In terms of biological role, may play a role in dendrite formation by melanocytes. The chain is Synaptotagmin-17 (syt17) from Xenopus tropicalis (Western clawed frog).